The primary structure comprises 290 residues: Type II restriction enzyme MjaIII (290 aa).

Belongs to the DpnII type II restriction endonuclease family.

The enzyme catalyses Endonucleolytic cleavage of DNA to give specific double-stranded fragments with terminal 5'-phosphates.. Functionally, a P subtype restriction enzyme that recognizes the double-stranded sequence 5'-GATC-3'; the cleavage site is unknown. The protein is Type II restriction enzyme MjaIII (mjaIIIR) of Methanocaldococcus jannaschii (strain ATCC 43067 / DSM 2661 / JAL-1 / JCM 10045 / NBRC 100440) (Methanococcus jannaschii).